We begin with the raw amino-acid sequence, 251 residues long: MKKAGLLFLVMIVIAVVAAGIGYWKLTGEESDTLRKIVLEECLPNQQQNQNPSPCAEVKPNAGYVVLKDLNGPLQYLLMPTYRINGTESPLLTDPSTPNFFWLAWQARDFMSKKYGQPVPDRAVSLAINSRTGHTQNHFHIHISCIRPDVREQLDKNLANISSRWLPLPGGLRGHEYLARRVTESELVQRSPFMMLAEEVPEAREHMGSYGLAMVRQSDNSFVLLATQRNLLTLNRASAEEIQDHECEILR.

Residues alanine 4–tryptophan 24 traverse the membrane as a helical segment.

The protein belongs to the Cdh family.

It localises to the cell inner membrane. It carries out the reaction a CDP-1,2-diacyl-sn-glycerol + H2O = a 1,2-diacyl-sn-glycero-3-phosphate + CMP + 2 H(+). It participates in phospholipid metabolism; CDP-diacylglycerol degradation; phosphatidate from CDP-diacylglycerol: step 1/1. The polypeptide is CDP-diacylglycerol pyrophosphatase (Shigella flexneri).